The following is a 292-amino-acid chain: Nitrogenase iron protein 2 (292 aa).

8-15 (GKGGIGKS) is a binding site for ATP. Cysteine 106 contributes to the [4Fe-4S] cluster binding site. The residue at position 109 (arginine 109) is an ADP-ribosylarginine; by dinitrogenase reductase ADP-ribosyltransferase. Position 142 (cysteine 142) interacts with [4Fe-4S] cluster.

It belongs to the NifH/BchL/ChlL family. As to quaternary structure, homodimer. [4Fe-4S] cluster serves as cofactor. In terms of processing, the reversible ADP-ribosylation of Arg-109 inactivates the nitrogenase reductase and regulates nitrogenase activity.

It catalyses the reaction N2 + 8 reduced [2Fe-2S]-[ferredoxin] + 16 ATP + 16 H2O = H2 + 8 oxidized [2Fe-2S]-[ferredoxin] + 2 NH4(+) + 16 ADP + 16 phosphate + 6 H(+). In terms of biological role, the key enzymatic reactions in nitrogen fixation are catalyzed by the nitrogenase complex, which has 2 components: the iron protein and the molybdenum-iron protein. The protein is Nitrogenase iron protein 2 (nifH2) of Methanothermococcus thermolithotrophicus (Methanococcus thermolithotrophicus).